The following is a 441-amino-acid chain: Growth/differentiation factor 9 (441 aa).

Positions 1 to 29 (MALPSNFLLGVCCFAWLCFLSSLSSQAST) are cleaved as a signal peptide. Positions 30-306 (EESQSGASEN…EVERSPRRRR (277 aa)) are excised as a propeptide. N163, N229, N258, and N325 each carry an N-linked (GlcNAc...) asparagine glycan. 3 disulfides stabilise this stretch: C340–C406, C369–C438, and C373–C440.

This sequence belongs to the TGF-beta family. As to quaternary structure, homodimer or heterodimer (Potential). But, in contrast to other members of this family, cannot be disulfide-linked. Phosphorylated; phosphorylation is critical for GDF9 function. Ovary. Strongly expressed in germinal vesicle (GV) stage oocytes, MII-stage oocytes and in zygotes.

It is found in the secreted. In terms of biological role, required for ovarian folliculogenesis. The protein is Growth/differentiation factor 9 (Gdf9) of Mus musculus (Mouse).